We begin with the raw amino-acid sequence, 79 residues long: UPF0180 protein BcerKBAB4_1316 (79 aa).

The protein belongs to the UPF0180 family.

The polypeptide is UPF0180 protein BcerKBAB4_1316 (Bacillus mycoides (strain KBAB4) (Bacillus weihenstephanensis)).